A 422-amino-acid chain; its full sequence is UDP-N-acetylglucosamine 1-carboxyvinyltransferase (422 aa).

22-23 (KN) provides a ligand contact to phosphoenolpyruvate. Arginine 93 provides a ligand contact to UDP-N-acetyl-alpha-D-glucosamine. Cysteine 117 serves as the catalytic Proton donor. Cysteine 117 is subject to 2-(S-cysteinyl)pyruvic acid O-phosphothioketal. Residues 122–126 (RPVDL), aspartate 308, and leucine 330 each bind UDP-N-acetyl-alpha-D-glucosamine.

It belongs to the EPSP synthase family. MurA subfamily.

It localises to the cytoplasm. The catalysed reaction is phosphoenolpyruvate + UDP-N-acetyl-alpha-D-glucosamine = UDP-N-acetyl-3-O-(1-carboxyvinyl)-alpha-D-glucosamine + phosphate. The protein operates within cell wall biogenesis; peptidoglycan biosynthesis. Its function is as follows. Cell wall formation. Adds enolpyruvyl to UDP-N-acetylglucosamine. The polypeptide is UDP-N-acetylglucosamine 1-carboxyvinyltransferase (Helicobacter pylori (strain Shi470)).